A 471-amino-acid polypeptide reads, in one-letter code: 3-isopropylmalate dehydratase large subunit (471 aa).

Cysteine 347, cysteine 407, and cysteine 410 together coordinate [4Fe-4S] cluster.

It belongs to the aconitase/IPM isomerase family. LeuC type 1 subfamily. In terms of assembly, heterodimer of LeuC and LeuD. [4Fe-4S] cluster is required as a cofactor.

It carries out the reaction (2R,3S)-3-isopropylmalate = (2S)-2-isopropylmalate. The protein operates within amino-acid biosynthesis; L-leucine biosynthesis; L-leucine from 3-methyl-2-oxobutanoate: step 2/4. Its function is as follows. Catalyzes the isomerization between 2-isopropylmalate and 3-isopropylmalate, via the formation of 2-isopropylmaleate. The protein is 3-isopropylmalate dehydratase large subunit of Buchnera aphidicola subsp. Baizongia pistaciae (strain Bp).